The sequence spans 321 residues: Polygalacturonan/rhamnogalacturonan transport system permease protein YteP (321 aa).

The 144-residue stretch at 1–144 folds into the ABC transmembrane type-1 domain; that stretch reads MKTAEAQAPA…YIPHFMSWVI (144 aa). A run of 3 helical transmembrane segments spans residues 21-41, 63-83, and 123-143; these read RKRLLIKLIQQKYLYLMILPG, YQPFLGILGSEWVGLKHFIRL, and IALFKKFVQTLIYIPHFMSWV.

This sequence belongs to the binding-protein-dependent transport system permease family. In terms of assembly, the complex is probably composed of two ATP-binding proteins (MsmX), two transmembrane proteins (YtcP and YteP) and a solute-binding protein (YtcQ).

It is found in the cell membrane. Involved in pectin degradation. Part of the ABC transporter complex YtcQP-YteP involved in the uptake of polygalacturonan and rhamnogalacturonan type I. Responsible for the translocation of the substrate across the membrane. The polypeptide is Polygalacturonan/rhamnogalacturonan transport system permease protein YteP (yteP) (Bacillus subtilis (strain 168)).